Here is a 588-residue protein sequence, read N- to C-terminus: Phosphatidylinositol-3,5-bisphosphate 3-phosphatase mtm-1 (588 aa).

A GRAM domain is found at 20-91; sequence IQESIDLKLL…GQVSRIEKVG (72 aa). The Myotubularin phosphatase domain occupies 164–543; it reads GWKIYSAEKE…CGLHVWIDYY (380 aa). Asparagine 293, asparagine 316, and isoleucine 317 together coordinate a 1,2-diacyl-sn-glycero-3-phospho-(1D-myo-inositol-3,5-bisphosphate). 3 residues coordinate a 1,2-diacyl-sn-glycero-3-phospho-(1D-myo-inositol-3-phosphate): asparagine 293, asparagine 316, and isoleucine 317. Cysteine 378 (phosphocysteine intermediate) is an active-site residue. A 1,2-diacyl-sn-glycero-3-phospho-(1D-myo-inositol-3,5-bisphosphate) is bound by residues serine 379, aspartate 380, glycine 381, tryptophan 382, aspartate 383, arginine 384, lysine 420, and arginine 424. Residues serine 379, aspartate 380, glycine 381, tryptophan 382, aspartate 383, and arginine 384 each contribute to the a 1,2-diacyl-sn-glycero-3-phospho-(1D-myo-inositol-3-phosphate) site. Serine 379 provides a ligand contact to phosphate. 4 residues coordinate phosphate: glycine 381, tryptophan 382, aspartate 383, and arginine 384. Arginine 424 is a binding site for a 1,2-diacyl-sn-glycero-3-phospho-(1D-myo-inositol-3-phosphate). Residues 563–588 adopt a coiled-coil conformation; the sequence is AQFVDEKKQLLDEIMALDDAAQKLTA.

The protein belongs to the protein-tyrosine phosphatase family. Non-receptor class myotubularin subfamily. Expressed in embryo, larva and in adults. Expressed in a few head and tail neurons. Expressed in hypodermis, body wall and pharyngeal muscles, sheath cells, vulva, distal tip cells and coelomocytes.

Its subcellular location is the cell membrane. It is found in the cell projection. It localises to the phagocytic cup. The protein localises to the apical cell membrane. The protein resides in the cytoplasmic granule membrane. The catalysed reaction is a 1,2-diacyl-sn-glycero-3-phospho-(1D-myo-inositol-3,5-bisphosphate) + H2O = a 1,2-diacyl-sn-glycero-3-phospho-(1D-myo-inositol-5-phosphate) + phosphate. It carries out the reaction a 1,2-diacyl-sn-glycero-3-phospho-(1D-myo-inositol-3-phosphate) + H2O = a 1,2-diacyl-sn-glycero-3-phospho-(1D-myo-inositol) + phosphate. It catalyses the reaction 1,2-dioctanoyl-sn-glycero-3-phospho-(1-D-myo-inositol-3-phosphate) + H2O = 1,2-dioctanoyl-sn-glycero-3-phospho-(1D-myo-inositol) + phosphate. In terms of biological role, lipid phosphatase that specifically dephosphorylates phosphatidylinositol 3-phosphate (PI3P) and phosphatidylinositol 3,5-bisphosphate (PI(3,5)P2). Negatively regulates accumulation of PI3P on intracellular vesicles. Negatively regulates phagocytosis of apoptotic cells probably by limiting the recruitment and/or the activation of ced-5, ced-2 and ced-12 complex. In addition, may positively regulate phagosome maturation by promoting recycling of apoptotic receptor ced-1 back to the plasma membrane. Essential for embryonic and larval development. May promote migration of distal tip cells. The protein is Phosphatidylinositol-3,5-bisphosphate 3-phosphatase mtm-1 of Caenorhabditis elegans.